A 118-amino-acid chain; its full sequence is NADH-ubiquinone oxidoreductase chain 3 (118 aa).

3 consecutive transmembrane segments (helical) span residues 6 to 26 (IFVYLVISLLLSLILIGVSFL), 62 to 82 (LVSILFIIFDLEVTFLFPWAV), and 87 to 107 (IGLFGFWSMMVFLFILTIGFV).

This sequence belongs to the complex I subunit 3 family.

The protein resides in the mitochondrion membrane. The enzyme catalyses a ubiquinone + NADH + 5 H(+)(in) = a ubiquinol + NAD(+) + 4 H(+)(out). Core subunit of the mitochondrial membrane respiratory chain NADH dehydrogenase (Complex I) that is believed to belong to the minimal assembly required for catalysis. Complex I functions in the transfer of electrons from NADH to the respiratory chain. The immediate electron acceptor for the enzyme is believed to be ubiquinone. The chain is NADH-ubiquinone oxidoreductase chain 3 (ND3) from Marchantia polymorpha (Common liverwort).